Reading from the N-terminus, the 737-residue chain is Protein bicaudal D homolog (737 aa).

Coiled-coil stretches lie at residues 1-255 (MAES…RNAE), 292-319 (GSSD…EKIF), and 547-684 (AENE…DRDR). The segment at 72–97 (YRSQHQRSTRSELENEESLLEESSAK) is disordered. A disordered region spans residues 686-737 (VFKRSSTRAPTRETYQPPRAVRYPGSTTTAQQPAPSSSGGSRGGPRRGDNQQ). Polar residues predominate over residues 710-719 (GSTTTAQQPA).

It belongs to the BicD family. As to quaternary structure, component of a dynein-regulating complex composed of at least bicd-1, dlc-1 and egal-1. Interacts with egal-1 and unc-83. As to expression, expressed in the excretory cell, body wall muscles, vulval muscle cells, PVD and FLP sensory neurons and AVF interneurons.

Its subcellular location is the nucleus envelope. The protein localises to the perikaryon. It localises to the cell projection. It is found in the dendrite. Part of a complex with dlc-1 and egal-1, which is recruited to the nuclear envelope by unc-83, where in turn, it recruits dynein to the nuclear surface and regulates nuclear migration in hypodermal precursor cells. Required for the formation of dendritic branches of PVD sensory neurons. The polypeptide is Protein bicaudal D homolog (Caenorhabditis elegans).